Consider the following 184-residue polypeptide: Cytidylate kinase (184 aa).

8–16 (GQPGSGKTT) contributes to the ATP binding site.

It belongs to the cytidylate kinase family. Type 2 subfamily.

It localises to the cytoplasm. The enzyme catalyses CMP + ATP = CDP + ADP. The catalysed reaction is dCMP + ATP = dCDP + ADP. The chain is Cytidylate kinase from Pyrobaculum neutrophilum (strain DSM 2338 / JCM 9278 / NBRC 100436 / V24Sta) (Thermoproteus neutrophilus).